Consider the following 591-residue polypeptide: Fidgetin-like protein 1 (591 aa).

Disordered regions lie at residues 1-117 and 223-249; these read MYSP…KSSL and GQEP…SQPI. Over residues 17-26 the composition is skewed to basic and acidic residues; it reads KRPETEENRG. Positions 76 to 93 are enriched in acidic residues; the sequence is DDDPESIVIDEDDEEDEP. Residues 237–249 are compositionally biased toward polar residues; sequence RQSSSQSNHSQPI. ATP is bound by residues A319 and 359–364; that span reads GTGKTM.

The protein belongs to the AAA ATPase family. As to quaternary structure, hexamer. The cofactor is Mg(2+).

The protein resides in the nucleus. It catalyses the reaction ATP + H2O = ADP + phosphate + H(+). Has a role in spindle assembly which acts in the progression through mitosis during embryogenesis. Required for fertility. The sequence is that of Fidgetin-like protein 1 (figl-1) from Caenorhabditis briggsae.